Here is a 367-residue protein sequence, read N- to C-terminus: uncharacterized protein (367 aa).

This is an uncharacterized protein from Buchnera aphidicola subsp. Acyrthosiphon pisum (strain APS) (Acyrthosiphon pisum symbiotic bacterium).